Here is a 282-residue protein sequence, read N- to C-terminus: Trans,polycis-polyprenyl diphosphate synthase ((2Z,6E)-farnesyl diphosphate specific) (282 aa).

The disordered stretch occupies residues 1-30 (MSPKTVFSTDTHREPIPPQPHPSGARPPQL). Residue aspartate 44 is part of the active site. Aspartate 44 contacts Mg(2+). Substrate is bound by residues 45 to 48 (GNGR), tryptophan 49, arginine 57, histidine 61, and 89 to 91 (STE). Residue asparagine 92 is the Proton acceptor of the active site. Residues tryptophan 93, arginine 95, arginine 212, and 218–220 (RLS) each bind substrate. A Mg(2+)-binding site is contributed by glutamate 231. The disordered stretch occupies residues 262 to 282 (GGAEPNPVGPPQSAAGAQGQD).

It belongs to the UPP synthase family. In terms of assembly, homodimer. Mg(2+) is required as a cofactor.

The enzyme catalyses (2Z,6E)-farnesyl diphosphate + 10 isopentenyl diphosphate = di-trans,deca-cis-tridecaprenyl diphosphate + 10 diphosphate. It carries out the reaction (2Z,6E)-farnesyl diphosphate + 11 isopentenyl diphosphate = di-trans,undeca-cis-tetradecaprenyl diphosphate + 11 diphosphate. It catalyses the reaction (2Z,6E)-farnesyl diphosphate + 9 isopentenyl diphosphate = di-trans,nona-cis-dodecaprenyl diphosphate + 9 diphosphate. Catalyzes the synthesis of Z,E-mixed prenyl diphosphates by a condensation of isopentenyl diphosphate to an allylic diphosphate. It shows a large substrate specificity accepting dimethylallyl diphosphate (DMAPP), GPP, E,Efarnesyl diphosphate (FPP), E,E,E-geranylgeranyl diphosphate (GGPP), neryl diphosphate (Z-GPP), and (2Z,6E)-farnesyl diphosphate (Z,E-FPP) as allylic substrates. The enzyme exhibits the highest activity when Z,E-FPP is employed as an allylic substrate. The major product is dodecaprenyl diphosphate (C60) under every allylic substrate conditions, but the enzyme is also able to synthesize even C70 prenyl diphosphate as the maximum chain-length product. This chain is Trans,polycis-polyprenyl diphosphate synthase ((2Z,6E)-farnesyl diphosphate specific), found in Thermobifida fusca (strain YX).